Consider the following 53-residue polypeptide: UPF0391 membrane protein YtjA (53 aa).

Transmembrane regions (helical) follow at residues 4 to 24 (WGII…GGLA) and 30 to 48 (AAKI…SLFM).

It belongs to the UPF0391 family.

The protein resides in the cell membrane. The protein is UPF0391 membrane protein YtjA of Escherichia coli O6:K15:H31 (strain 536 / UPEC).